Here is a 144-residue protein sequence, read N- to C-terminus: Large ribosomal subunit protein uL15 (144 aa).

The segment at 1 to 58 (MNLSNLRAPRKANEKKKRVGRGMGSGMGKTSARGHKGQRSRSGSRMMRGFEGGQMPLH) is disordered. The segment covering 8–20 (APRKANEKKKRVG) has biased composition (basic residues). Over residues 40 to 49 (SRSGSRMMRG) the composition is skewed to low complexity.

It belongs to the universal ribosomal protein uL15 family. In terms of assembly, part of the 50S ribosomal subunit.

Its function is as follows. Binds to the 23S rRNA. This Koribacter versatilis (strain Ellin345) protein is Large ribosomal subunit protein uL15.